A 448-amino-acid chain; its full sequence is Exodeoxyribonuclease 7 large subunit (448 aa).

Belongs to the XseA family. As to quaternary structure, heterooligomer composed of large and small subunits.

It is found in the cytoplasm. It localises to the nucleoid. The catalysed reaction is Exonucleolytic cleavage in either 5'- to 3'- or 3'- to 5'-direction to yield nucleoside 5'-phosphates.. Functionally, bidirectionally degrades single-stranded DNA into large acid-insoluble oligonucleotides, which are then degraded further into small acid-soluble oligonucleotides. The chain is Exodeoxyribonuclease 7 large subunit from Bacillus subtilis (strain 168).